A 209-amino-acid chain; its full sequence is Casparian strip membrane protein 1 (209 aa).

Residues 1 to 35 (MKTGESTAIDIAPETNNSGPIGKKKSTTPLLAAPV) are disordered. At 1-46 (MKTGESTAIDIAPETNNSGPIGKKKSTTPLLAAPVPDRGTHRMKRG) the chain is on the cytoplasmic side. A helical membrane pass occupies residues 47-67 (LAIFDFVLRIGVLASALAAAA). The Extracellular portion of the chain corresponds to 68–96 (AMGTSEQTLPFFTQFFQFEASYDDLPTFQ). A helical membrane pass occupies residues 97–117 (FFVVAMAVVAGYVVLSIPFSI). Residues 118–129 (VCIIRPHAAGPR) lie on the Cytoplasmic side of the membrane. A helical transmembrane segment spans residues 130-150 (VLLLILDSVALTLNTAAAGAA). Over 151-182 (AAVVSLAHSGNSSTNWLAICNQFGDFCQQASG) the chain is Extracellular. An N-linked (GlcNAc...) asparagine glycan is attached at Asn161. The chain crosses the membrane as a helical span at residues 183–203 (AVVGSFAAVLLFLLLILFSAL). The Cytoplasmic portion of the chain corresponds to 204 to 209 (SLKNSH).

It belongs to the Casparian strip membrane proteins (CASP) family. As to quaternary structure, homodimer and heterodimers.

It localises to the cell membrane. Regulates membrane-cell wall junctions and localized cell wall deposition. Required for establishment of the Casparian strip membrane domain (CSD) and the subsequent formation of Casparian strips, a cell wall modification of the root endodermis that determines an apoplastic barrier between the intraorganismal apoplasm and the extraorganismal apoplasm and prevents lateral diffusion. In Cucumis melo (Muskmelon), this protein is Casparian strip membrane protein 1.